Here is a 190-residue protein sequence, read N- to C-terminus: Ribosome maturation factor RimM (190 aa).

A PRC barrel domain is found at 95-177; that stretch reads EDDEFFYTDL…AGLIDSPDDL (83 aa). The interval 170–190 is disordered; the sequence is LIDSPDDLTGKPPKPPGKTKE. A compositionally biased stretch (pro residues) spans 181–190; the sequence is PPKPPGKTKE.

It belongs to the RimM family. As to quaternary structure, binds ribosomal protein uS19.

Its subcellular location is the cytoplasm. Functionally, an accessory protein needed during the final step in the assembly of 30S ribosomal subunit, possibly for assembly of the head region. Essential for efficient processing of 16S rRNA. May be needed both before and after RbfA during the maturation of 16S rRNA. It has affinity for free ribosomal 30S subunits but not for 70S ribosomes. This chain is Ribosome maturation factor RimM, found in Rhizobium rhizogenes (strain K84 / ATCC BAA-868) (Agrobacterium radiobacter).